We begin with the raw amino-acid sequence, 360 residues long: Phospho-N-acetylmuramoyl-pentapeptide-transferase (360 aa).

Transmembrane regions (helical) follow at residues A26 to E46, M74 to G94, Y97 to Y117, Y134 to N154, V168 to S188, G199 to S219, S236 to F256, V263 to L283, I288 to V308, and V338 to K358.

It belongs to the glycosyltransferase 4 family. MraY subfamily. Requires Mg(2+) as cofactor.

It is found in the cell inner membrane. It catalyses the reaction UDP-N-acetyl-alpha-D-muramoyl-L-alanyl-gamma-D-glutamyl-meso-2,6-diaminopimeloyl-D-alanyl-D-alanine + di-trans,octa-cis-undecaprenyl phosphate = di-trans,octa-cis-undecaprenyl diphospho-N-acetyl-alpha-D-muramoyl-L-alanyl-D-glutamyl-meso-2,6-diaminopimeloyl-D-alanyl-D-alanine + UMP. The protein operates within cell wall biogenesis; peptidoglycan biosynthesis. Its function is as follows. Catalyzes the initial step of the lipid cycle reactions in the biosynthesis of the cell wall peptidoglycan: transfers peptidoglycan precursor phospho-MurNAc-pentapeptide from UDP-MurNAc-pentapeptide onto the lipid carrier undecaprenyl phosphate, yielding undecaprenyl-pyrophosphoryl-MurNAc-pentapeptide, known as lipid I. In Shewanella oneidensis (strain ATCC 700550 / JCM 31522 / CIP 106686 / LMG 19005 / NCIMB 14063 / MR-1), this protein is Phospho-N-acetylmuramoyl-pentapeptide-transferase.